Here is a 628-residue protein sequence, read N- to C-terminus: E3 SUMO-protein ligase PIAS3 (628 aa).

The interval 1–200 (MAELGELKHM…QLRFCLCETS (200 aa)) is interaction with CCAR2. One can recognise an SAP domain in the interval 11 to 45 (VMSFRVSELQVLLGFAGRNKSGRKHELLAKALHLL). An LXXLL motif motif is present at residues 19 to 23 (LQVLL). Glycyl lysine isopeptide (Lys-Gly) (interchain with G-Cter in SUMO2) cross-links involve residues Lys46, Lys56, Lys230, and Lys307. Positions 115-280 (MHPPLPQPVH…SLSVYLVRQL (166 aa)) constitute a PINIT domain. The SP-RING-type zinc-finger motif lies at 312-393 (PDSEVATTSL…FMEILSSCSD (82 aa)). Cys343, His345, Cys366, and Cys369 together coordinate Zn(2+). The SUMO1-binding stretch occupies residues 450–460 (LTIESSSDEED). Glycyl lysine isopeptide (Lys-Gly) (interchain with G-Cter in SUMO2) cross-links involve residues Lys466 and Lys482. The tract at residues 597–617 (VAPGGALREGHGGPLPSGPSL) is disordered.

It belongs to the PIAS family. In terms of assembly, monomer. Binds SUMO1 and UBE2I. Interacts with BCL11A, HMGA2, IRF1, MITF and NCOA2. Interacts with STAT5; the interaction occurs on stimulation by PRL. Interacts with GFI1; the interaction relieves the inhibitory effect of PIAS3 on STAT3-mediated transcriptional activity. Interacts with AR, PLAG1 and ZFHX3. Interacts with STAT3; the interaction occurs on stimulation by IL6, CNTF or OSM and inhibits the DNA binding activity of STAT3. Interacts with MTA1. Interacts with CCAR2 (via N-terminus). Interacts with TRIM8. Interacts with PRDM1/Blimp-1. Sumoylated. Widely expressed.

It localises to the cytoplasm. It is found in the nucleus. Its subcellular location is the nucleus speckle. Its pathway is protein modification; protein sumoylation. Functionally, functions as an E3-type small ubiquitin-like modifier (SUMO) ligase, stabilizing the interaction between UBE2I and the substrate, and as a SUMO-tethering factor. Plays a crucial role as a transcriptional coregulation in various cellular pathways, including the STAT pathway and the steroid hormone signaling pathway. Involved in regulating STAT3 signaling via inhibiting STAT3 DNA-binding and suppressing cell growth. Enhances the sumoylation of MTA1 and may participate in its paralog-selective sumoylation. Sumoylates CCAR2 which promotes its interaction with SIRT1. Diminishes the sumoylation of ZFHX3 by preventing the colocalization of ZFHX3 with SUMO1 in the nucleus. This chain is E3 SUMO-protein ligase PIAS3 (PIAS3), found in Homo sapiens (Human).